Reading from the N-terminus, the 345-residue chain is Very-long-chain 3-oxoacyl-CoA reductase (345 aa).

The helical transmembrane segment at 26 to 46 (GAAVLLTTGTLFIASRVLTFV) threads the bilayer. V71, D125, D133, N152, Y219, K223, I252, and S254 together coordinate NADP(+). Y219 (proton donor) is an active-site residue. The Lowers pKa of active site Tyr role is filled by K223.

This sequence belongs to the short-chain dehydrogenases/reductases (SDR) family.

It is found in the endoplasmic reticulum membrane. It carries out the reaction a very-long-chain (3R)-3-hydroxyacyl-CoA + NADP(+) = a very-long-chain 3-oxoacyl-CoA + NADPH + H(+). It functions in the pathway lipid metabolism; fatty acid biosynthesis. In terms of biological role, component of the microsomal membrane bound fatty acid elongation system, which produces the 26-carbon very long-chain fatty acids (VLCFA) from palmitate. Catalyzes the reduction of the 3-ketoacyl-CoA intermediate that is formed in each cycle of fatty acid elongation. VLCFAs serve as precursors for ceramide and sphingolipids. In Aspergillus fumigatus (strain CBS 144.89 / FGSC A1163 / CEA10) (Neosartorya fumigata), this protein is Very-long-chain 3-oxoacyl-CoA reductase.